The following is a 900-amino-acid chain: MVMNILTKIFGSRNDRTLRRMRKNVDVINRLEPEMEKLSDEELQAKTLEFRVRLEKGESLENLLPEAFAVVRESSKRVFGMRHFDVQLIGGMVLNERCIAEMRTGEGKTLTATLPAYLNALTGRGVHVVTVNDYLAQRDAENNRPLFEFLGLSVGINLPGMPAPAKREAYAADITYGTNNEYGFDYLRDNMAFSPEERVQRKLYYALVDEVDSILIDEARTPLIISGPAEDSSELYISVNKIIPHLIRQEKEDSDTFHGEGHFSVDEKARQVNLTERGLVLVEELLVKEGIMEEGESLYSPTNIMLMHHVTAALRAHVLFTRDVDYIVKDGEVIIVDEHTGRTMQGRRWSDGLHQAVEAKEKVTIQNENQTLASITFQNYFRLYEKLAGMTGTADTEAFEFSSIYKLDTIVVPTNRPMIRKDLPDLVYMTEQEKIDAIIEDIKERSVKGQPILVGTISIEKSEVVSHALEKAGIKHNVLNAKFHAMEADIVAQAGQAGAVTIATNMAGRGTDIVLGGSWQAEVALLENPNDEQIAEIKAAWKVRHDAVLAAGGLHIIGTERHESRRIDNQLRGRSGRQGDAGSSRFYLSMEDALMRIFASDRVSNMMRKLGMKPGEAIEHPWVTKAIANAQRKVESRNFDIRKQLLEYDDVANDQRRAIYTQRNELLDVSDISETITSIREDVFKATIDSYIPPQSLEEMWDVEGLEQRLKNDFDLDMPVKAWLDKEPELHEETLRERIFQQALEVYHRKEEVVGSEVMRNFEKGVMLQTLDSLWKEHLAAMDYLRQGIHLRGYAQKDPKQEYKRESFSMFAAMLESLKYEVISTLSKVQVRMPEEIEALEQQRREEAERLARQQQLSHQEEDSLNTGSPAQADRKIGRNDPCPCGSGKKYKQCHGRLQK.

Residues Gln-87, 105–109 (GEGKT), and Asp-512 contribute to the ATP site. A compositionally biased stretch (basic and acidic residues) spans 842–852 (QQRREEAERLA). The interval 842 to 900 (QQRREEAERLARQQQLSHQEEDSLNTGSPAQADRKIGRNDPCPCGSGKKYKQCHGRLQK) is disordered. 4 residues coordinate Zn(2+): Cys-883, Cys-885, Cys-894, and His-895. A compositionally biased stretch (basic residues) spans 889–900 (KKYKQCHGRLQK).

This sequence belongs to the SecA family. In terms of assembly, monomer and homodimer. Part of the essential Sec protein translocation apparatus which comprises SecA, SecYEG and auxiliary proteins SecDF-YajC and YidC. Zn(2+) serves as cofactor.

The protein localises to the cell inner membrane. It localises to the cytoplasm. The catalysed reaction is ATP + H2O + cellular proteinSide 1 = ADP + phosphate + cellular proteinSide 2.. Its function is as follows. Part of the Sec protein translocase complex. Interacts with the SecYEG preprotein conducting channel. Has a central role in coupling the hydrolysis of ATP to the transfer of proteins into and across the cell membrane, serving both as a receptor for the preprotein-SecB complex and as an ATP-driven molecular motor driving the stepwise translocation of polypeptide chains across the membrane. The protein is Protein translocase subunit SecA of Pectobacterium carotovorum subsp. carotovorum (strain PC1).